A 310-amino-acid chain; its full sequence is MPSHLLVLSLLVALLVVVSCGPGSDHGWGYDENNGPDTWQGKCQNHLKQSPIDIRAPDVDYALLHRMHFLNYDMDGKIELSNTGRTLFAGGFESWQHKQPMIQGGGLKHRYKLAQFHLHWGQNDAVGSEHAMGSLHYPAELHLVHVREGLTLKEALSRPDGLAVVGVFLAKTNDPVANKFSPISERLHDLRHSGNKTELKNFRTKYVLPLDTEAFYRYEGSLTTPDCSEAVIWTVLAEPMAISSHQLHLLRQLHNKELVKSDKNYRPLQPLNGRRIQYRPSKLDRAMICSSFATTSVIITYVAILSAMLI.

Residues 1–20 (MPSHLLVLSLLVALLVVVSC) form the signal peptide. The 255-residue stretch at 26–280 (HGWGYDENNG…LNGRRIQYRP (255 aa)) folds into the Alpha-carbonic anhydrase domain. Histidine 117, histidine 119, and histidine 142 together coordinate Zn(2+). 223–224 (TT) is a substrate binding site.

It belongs to the alpha-carbonic anhydrase family.

The protein resides in the secreted. It catalyses the reaction hydrogencarbonate + H(+) = CO2 + H2O. In terms of biological role, reversible hydration of carbon dioxide. This Caenorhabditis elegans protein is Putative carbonic anhydrase 5 (cah-5).